The following is a 144-amino-acid chain: 3-dehydroquinate dehydratase (144 aa).

Tyr-22 acts as the Proton acceptor in catalysis. Asn-73, His-79, and Asp-86 together coordinate substrate. His-99 acts as the Proton donor in catalysis. Substrate-binding positions include 100-101 (IS) and Arg-110.

It belongs to the type-II 3-dehydroquinase family. Homododecamer.

It catalyses the reaction 3-dehydroquinate = 3-dehydroshikimate + H2O. It functions in the pathway metabolic intermediate biosynthesis; chorismate biosynthesis; chorismate from D-erythrose 4-phosphate and phosphoenolpyruvate: step 3/7. In terms of biological role, catalyzes a trans-dehydration via an enolate intermediate. This is 3-dehydroquinate dehydratase from Mycobacteroides abscessus (strain ATCC 19977 / DSM 44196 / CCUG 20993 / CIP 104536 / JCM 13569 / NCTC 13031 / TMC 1543 / L948) (Mycobacterium abscessus).